The sequence spans 243 residues: NAD-dependent protein deacetylase (243 aa).

In terms of domain architecture, Deacetylase sirtuin-type spans 1–243 (MKHDLETLKH…VSVVKSLMTE (243 aa)). Residues Ala24, Phe35, Arg36, Gln105, Ile107, Asp108, and His123 each coordinate NAD(+). Phe35 provides a ligand contact to nicotinamide. Nicotinamide contacts are provided by Ile107 and Asp108. His123 functions as the Proton acceptor in the catalytic mechanism. Residues Cys131, Cys134, Cys151, and Cys154 each coordinate Zn(2+). Residues Ser192, Ser193, Asn215, and Asp232 each contribute to the NAD(+) site.

Belongs to the sirtuin family. Class U subfamily. It depends on Zn(2+) as a cofactor.

It localises to the cytoplasm. It carries out the reaction N(6)-acetyl-L-lysyl-[protein] + NAD(+) + H2O = 2''-O-acetyl-ADP-D-ribose + nicotinamide + L-lysyl-[protein]. Its function is as follows. NAD-dependent protein deacetylase which modulates the activities of several enzymes which are inactive in their acetylated form. This chain is NAD-dependent protein deacetylase, found in Staphylococcus aureus (strain COL).